The primary structure comprises 313 residues: Cobalamin biosynthesis protein CobD (313 aa).

A run of 5 helical transmembrane segments spans residues 52–72, 79–99, 154–174, 204–224, and 289–309; these read VAGAVHVGLLVGAVGLLGAAL, CWPVAATATATWAALGGTSLA, VVPLLWAASSGVPAVLGYRAI, YVGARATAVLVVICAPVVGGS, and AVVLSRVVQAGAAVLAVMLVY.

It belongs to the CobD/CbiB family.

Its subcellular location is the cell membrane. Its pathway is cofactor biosynthesis; adenosylcobalamin biosynthesis. In terms of biological role, converts cobyric acid to cobinamide by the addition of aminopropanol on the F carboxylic group. This chain is Cobalamin biosynthesis protein CobD, found in Mycobacterium bovis (strain ATCC BAA-935 / AF2122/97).